An 80-amino-acid polypeptide reads, in one-letter code: uncharacterized protein (80 aa).

Residues 12–32 (FKIIALILLIVLIINLSYKLF) traverse the membrane as a helical segment.

Its subcellular location is the membrane. This is an uncharacterized protein from Saccharomyces cerevisiae (strain ATCC 204508 / S288c) (Baker's yeast).